The following is a 105-amino-acid chain: uncharacterized protein (105 aa).

This is an uncharacterized protein from Archaeoglobus fulgidus (strain ATCC 49558 / DSM 4304 / JCM 9628 / NBRC 100126 / VC-16).